The following is a 96-amino-acid chain: Frd operon uncharacterized protein C (96 aa).

This sequence belongs to the HupF/HypC family.

This Proteus vulgaris protein is Frd operon uncharacterized protein C.